The following is a 152-amino-acid chain: Early glycoprotein GP48 (152 aa).

The signal sequence occupies residues M1 to G25. N48, N53, N61, N69, N108, N112, N122, N139, and N148 each carry an N-linked (GlcNAc...) asparagine; by host glycan.

This sequence belongs to the RL11 family. N-glycosylated and possibly O-glycosylated.

It is found in the virion membrane. In Homo sapiens (Human), this protein is Early glycoprotein GP48 (UL4).